The following is a 31-amino-acid chain: Chassatide C5 (31 aa).

The segment at residues 1 to 31 (GVIPCGESCVFIPCISSVVGCSCKNKVCYRN) is a cross-link (cyclopeptide (Gly-Asn)). Disulfide bonds link C5–C21, C9–C23, and C14–C28.

This is a cyclic peptide. Expressed in pedicel, root and stem but not in leaf and fruit (at protein level).

Functionally, probably participates in a plant defense mechanism. In Chassalia chartacea (Chassalia curviflora), this protein is Chassatide C5.